We begin with the raw amino-acid sequence, 119 residues long: MICGVGIDIIELNRMEALIERNERFIERILTENEQRKFQRLSANRKVEYIAGRFAAKEAFAKAVGTGIGKVSFKDIEIINNDYGAPNMKVKGYNDNVIHLSISHSKTYAVANVVLETRE.

Residues Asp-8 and Glu-58 each coordinate Mg(2+).

Belongs to the P-Pant transferase superfamily. AcpS family. Requires Mg(2+) as cofactor.

It localises to the cytoplasm. The enzyme catalyses apo-[ACP] + CoA = holo-[ACP] + adenosine 3',5'-bisphosphate + H(+). Transfers the 4'-phosphopantetheine moiety from coenzyme A to a Ser of acyl-carrier-protein. This is Holo-[acyl-carrier-protein] synthase from Oceanobacillus iheyensis (strain DSM 14371 / CIP 107618 / JCM 11309 / KCTC 3954 / HTE831).